The primary structure comprises 347 residues: GMP reductase (347 aa).

108 to 131 (ADFAKTAQILALNPALNFVCIDVA) is a binding site for NADP(+). 2 residues coordinate K(+): G181 and G183. C186 acts as the Thioimidate intermediate in catalysis. An NADP(+)-binding site is contributed by 216–239 (IVSDGGCTMPGDVAKAFGGGADFV).

Belongs to the IMPDH/GMPR family. GuaC type 1 subfamily. Homotetramer.

The enzyme catalyses IMP + NH4(+) + NADP(+) = GMP + NADPH + 2 H(+). Functionally, catalyzes the irreversible NADPH-dependent deamination of GMP to IMP. It functions in the conversion of nucleobase, nucleoside and nucleotide derivatives of G to A nucleotides, and in maintaining the intracellular balance of A and G nucleotides. The chain is GMP reductase from Salmonella arizonae (strain ATCC BAA-731 / CDC346-86 / RSK2980).